Consider the following 223-residue polypeptide: Neurotrophic factor BDNF precursor form (223 aa).

The first 5 residues, serine 1–alanine 5, serve as a signal peptide directing secretion. A propeptide spanning residues alanine 6 to arginine 114 is cleaved from the precursor. Residue asparagine 107 is glycosylated (N-linked (GlcNAc...) asparagine). Intrachain disulfides connect cysteine 127–cysteine 194 and cysteine 172–cysteine 223.

Belongs to the NGF-beta family.

The protein resides in the secreted. Promotes the survival of neuronal populations that are all located either in the central nervous system or directly connected to it. This chain is Neurotrophic factor BDNF precursor form (BDNF), found in Calabaria reinhardtii (Calabar boa).